The primary structure comprises 448 residues: Exodeoxyribonuclease 7 large subunit (448 aa).

The protein belongs to the XseA family. As to quaternary structure, heterooligomer composed of large and small subunits.

Its subcellular location is the cytoplasm. It carries out the reaction Exonucleolytic cleavage in either 5'- to 3'- or 3'- to 5'-direction to yield nucleoside 5'-phosphates.. In terms of biological role, bidirectionally degrades single-stranded DNA into large acid-insoluble oligonucleotides, which are then degraded further into small acid-soluble oligonucleotides. This Hamiltonella defensa subsp. Acyrthosiphon pisum (strain 5AT) protein is Exodeoxyribonuclease 7 large subunit.